The following is a 190-amino-acid chain: Ohanin (190 aa).

The signal sequence occupies residues 1–20 (MLLFTLCFFADQENGGKALA). In terms of domain architecture, B30.2/SPRY spans 21–127 (SPPGNWQKAD…RIWQKGLWWL (107 aa)). The propeptide occupies 128–190 (RRLETDSDKL…IGARVSLANL (63 aa)).

In terms of tissue distribution, expressed by the venom gland.

Its subcellular location is the secreted. Functionally, neurotoxin that produces dose-dependent hypolocomotion and hyperalgesia in mice. May directly act on the central nervous system, as it is 6500-fold more potent when administered intracerebroventricularly than intraperitoneal. This Ophiophagus hannah (King cobra) protein is Ohanin.